Consider the following 185-residue polypeptide: Ribosome-recycling factor (185 aa).

Residues 138 to 179 show a composition bias toward basic and acidic residues; that stretch reads TLKRQEKNGDITEDEQRSLEKQVQKVTDDATKEIDKLADQKS. Positions 138-185 are disordered; it reads TLKRQEKNGDITEDEQRSLEKQVQKVTDDATKEIDKLADQKSQEITQG.

The protein belongs to the RRF family.

Its subcellular location is the cytoplasm. In terms of biological role, responsible for the release of ribosomes from messenger RNA at the termination of protein biosynthesis. May increase the efficiency of translation by recycling ribosomes from one round of translation to another. The protein is Ribosome-recycling factor of Lactobacillus gasseri (strain ATCC 33323 / DSM 20243 / BCRC 14619 / CIP 102991 / JCM 1131 / KCTC 3163 / NCIMB 11718 / NCTC 13722 / AM63).